We begin with the raw amino-acid sequence, 735 residues long: Peroxisomal multifunctional enzyme type 2 (735 aa).

The (3R)-hydroxyacyl-CoA dehydrogenase stretch occupies residues 1–305; it reads MASPLRFDGR…VEVLHKVDSE (305 aa). Residues 13 to 37, Leu-21, and Asp-40 contribute to the NAD(+) site; that span reads LVTG…ALVI. Lys-46 carries the post-translational modification N6-acetyllysine; alternate. Lys-46 is modified (N6-succinyllysine; alternate). Residue Ser-52 is modified to Phosphoserine. An N6-succinyllysine mark is found at Lys-57 and Lys-68. An NAD(+)-binding site is contributed by 75–76; the sequence is SV. An N6-succinyllysine modification is found at Lys-84. Residue Asn-99 participates in NAD(+) binding. Ser-151 is a substrate binding site. Tyr-164 acts as the Proton acceptor in catalysis. NAD(+) contacts are provided by residues 164 to 168 and 196 to 199; these read YSAAK and AGSR. Thr-265 carries the phosphothreonine modification. Lys-275 is modified (N6-succinyllysine). Residues Ser-304 and Ser-308 each carry the phosphoserine modification. Residues 321–621 form an enoyl-CoA hydratase 2 region; that stretch reads SGFVGAVGHK…TQTPSEGGEL (301 aa). At Lys-355 the chain carries N6-succinyllysine. 405–406 provides a ligand contact to (3R)-3-hydroxydecanoyl-CoA; the sequence is HG. Residue Lys-423 is modified to N6-succinyllysine. (3R)-3-hydroxydecanoyl-CoA contacts are provided by residues Lys-434, 509–514, Gly-532, and Phe-562; that span reads DWNPLH. One can recognise a MaoC-like domain in the interval 483-599; sequence VPNRPPDAVL…HETGDVVISN (117 aa). Position 564 is an N6-acetyllysine (Lys-564). 2 positions are modified to N6-succinyllysine: Lys-578 and Lys-662. Residues 623–735 enclose the SCP2 domain; that stretch reads SALVFGEIGR…QMILKDYAKL (113 aa). Position 668 is an N6-acetyllysine (Lys-668). Residue Gln-705 participates in substrate binding. Lys-706 carries the post-translational modification N6-acetyllysine. Gln-723 lines the substrate pocket. An N6-succinyllysine modification is found at Lys-724. The short motif at 733–735 is the Microbody targeting signal element; the sequence is AKL.

The protein belongs to the short-chain dehydrogenases/reductases (SDR) family. Homodimer. Present in many tissues with highest concentrations in liver and kidney.

Its subcellular location is the peroxisome. The enzyme catalyses a (3R)-3-hydroxyacyl-CoA + NAD(+) = a 3-oxoacyl-CoA + NADH + H(+). The catalysed reaction is (24R,25R)-3alpha,7alpha,12alpha,24-tetrahydroxy-5beta-cholestan-26-oyl-CoA = (24E)-3alpha,7alpha,12alpha-trihydroxy-5beta-cholest-24-en-26-oyl-CoA + H2O. It catalyses the reaction a (3R)-3-hydroxyacyl-CoA = a (2E)-enoyl-CoA + H2O. It carries out the reaction (2E)-octenoyl-CoA + H2O = (3R)-hydroxyoctanoyl-CoA. The enzyme catalyses (3R)-hydroxyoctanoyl-CoA + NAD(+) = 3-oxooctanoyl-CoA + NADH + H(+). The catalysed reaction is (3R)-hydroxyhexadecanoyl-CoA + NAD(+) = 3-oxohexadecanoyl-CoA + NADH + H(+). It catalyses the reaction (2E)-hexadecenedioyl-CoA + H2O = (3R)-hydroxyhexadecanedioyl-CoA. It carries out the reaction (3R)-hydroxyhexadecanedioyl-CoA + NAD(+) = 3-oxohexadecanedioyl-CoA + NADH + H(+). The enzyme catalyses (3R)-hydroxyhexadecanoyl-CoA = (2E)-hexadecenoyl-CoA + H2O. The catalysed reaction is (3R)-3-hydroxydecanoyl-CoA = (2E)-decenoyl-CoA + H2O. It catalyses the reaction (3R)-3-hydroxydecanoyl-CoA + NAD(+) = 3-oxodecanoyl-CoA + NADH + H(+). It carries out the reaction (24R,25R)-3alpha,7alpha,12alpha,24-tetrahydroxy-5beta-cholestan-26-oyl-CoA + NAD(+) = 3alpha,7alpha,12alpha-trihydroxy-24-oxo-5beta-cholestan-26-oyl-CoA + NADH + H(+). It functions in the pathway lipid metabolism; fatty acid beta-oxidation. In terms of biological role, bifunctional enzyme acting on the peroxisomal fatty acid beta-oxidation pathway. Catalyzes two of the four reactions in fatty acid degradation: hydration of 2-enoyl-CoA (trans-2-enoyl-CoA) to produce (3R)-3-hydroxyacyl-CoA, and dehydrogenation of (3R)-3-hydroxyacyl-CoA to produce 3-ketoacyl-CoA (3-oxoacyl-CoA), which is further metabolized by SCPx. Can use straight-chain and branched-chain fatty acids, as well as bile acid intermediates as substrates. In Mus musculus (Mouse), this protein is Peroxisomal multifunctional enzyme type 2.